We begin with the raw amino-acid sequence, 68 residues long: Copper transport protein ATOX1 (68 aa).

Residues 1 to 63 (MPKHEFSVDM…TLEKTGKAVS (63 aa)) form the HMA domain. Residues cysteine 12 and cysteine 15 each contribute to the Cu cation site. Position 47 is a phosphoserine (serine 47). N6-acetyllysine is present on lysine 60.

It belongs to the ATX1 family. Homodimer. Interacts with ATP7B. Interacts with ATP7A. Interacts (via dimer form) with SLC31A1 (via C-terminal domain); this interaction improves ATOX1 stability and controls intracellular Cu(I) levels.

Binds and deliver cytosolic copper to the copper ATPase proteins. May be important in cellular antioxidant defense. This is Copper transport protein ATOX1 from Canis lupus familiaris (Dog).